The chain runs to 301 residues: Galectin-6 (301 aa).

Galectin domains lie at 19–149 (YKRP…INFF) and 173–301 (YVGA…YVHI).

This Mus musculus (Mouse) protein is Galectin-6 (Lgals6).